The primary structure comprises 388 residues: L-lactate dehydrogenase (388 aa).

The region spanning 1 to 380 is the FMN hydroxy acid dehydrogenase domain; it reads MIISAASDYR…SADALSRVTR (380 aa). Tyrosine 24 is a substrate binding site. 2 residues coordinate FMN: serine 106 and glutamine 127. Tyrosine 129 lines the substrate pocket. FMN is bound at residue threonine 155. Arginine 164 provides a ligand contact to substrate. Lysine 251 is a binding site for FMN. The active-site Proton acceptor is the histidine 275. Arginine 278 contributes to the substrate binding site. 306 to 330 is an FMN binding site; that stretch reads DSGIRSGLDVVRMLALGADAVLLGR.

The protein belongs to the FMN-dependent alpha-hydroxy acid dehydrogenase family. It depends on FMN as a cofactor.

Its subcellular location is the cell inner membrane. It catalyses the reaction (S)-lactate + A = pyruvate + AH2. Functionally, catalyzes the conversion of L-lactate to pyruvate. Is coupled to the respiratory chain. In Xanthomonas euvesicatoria pv. vesicatoria (strain 85-10) (Xanthomonas campestris pv. vesicatoria), this protein is L-lactate dehydrogenase.